The sequence spans 75 residues: UPF0352 protein ASA_2693 (75 aa).

It belongs to the UPF0352 family.

The chain is UPF0352 protein ASA_2693 from Aeromonas salmonicida (strain A449).